Consider the following 408-residue polypeptide: Histidine--tRNA ligase (408 aa).

This sequence belongs to the class-II aminoacyl-tRNA synthetase family.

The protein localises to the cytoplasm. The enzyme catalyses tRNA(His) + L-histidine + ATP = L-histidyl-tRNA(His) + AMP + diphosphate + H(+). In Methanospirillum hungatei JF-1 (strain ATCC 27890 / DSM 864 / NBRC 100397 / JF-1), this protein is Histidine--tRNA ligase.